The sequence spans 303 residues: Putative monooxygenase p33MONOX (303 aa).

Disordered regions lie at residues Met1–Met20, Leu37–Lys56, His66–Val96, Lys156–Ser233, and Arg260–Gln283. Thr44 is subject to Phosphothreonine. The short motif at Leu67–Val77 is the Flavin-containing monooxygenase motif element. Residues Ser76–Asp89 show a composition bias toward polar residues. A compositionally biased stretch (low complexity) spans Ala170–Ser183. Thr175 is modified (phosphothreonine). Ser183 is subject to Phosphoserine.

This sequence belongs to the P33MONOX family. Interacts with NELFB, NOL12 and PRNP. Expressed in neuronal pyramidal cells of the hippocampus and in the neurons of the cortex.

Its subcellular location is the cytoplasm. Its function is as follows. Potential NADPH-dependent oxidoreductase. May be involved in the regulation of neuronal survival, differentiation and axonal outgrowth. This is Putative monooxygenase p33MONOX (P33monox) from Mus musculus (Mouse).